The sequence spans 336 residues: tRNA N6-adenosine threonylcarbamoyltransferase (336 aa).

Fe cation is bound by residues histidine 115, histidine 119, and tyrosine 136. Substrate is bound by residues 136-140 (YVAGG), aspartate 168, glutamate 185, and serine 266. Residue aspartate 294 coordinates Fe cation.

The protein belongs to the KAE1 / TsaD family. Fe(2+) is required as a cofactor.

Its subcellular location is the cytoplasm. It catalyses the reaction L-threonylcarbamoyladenylate + adenosine(37) in tRNA = N(6)-L-threonylcarbamoyladenosine(37) in tRNA + AMP + H(+). Functionally, required for the formation of a threonylcarbamoyl group on adenosine at position 37 (t(6)A37) in tRNAs that read codons beginning with adenine. Is probably involved in the transfer of the threonylcarbamoyl moiety of threonylcarbamoyl-AMP (TC-AMP) to the N6 group of A37. The sequence is that of tRNA N6-adenosine threonylcarbamoyltransferase from Thermofilum pendens (strain DSM 2475 / Hrk 5).